A 172-amino-acid chain; its full sequence is Cold-inducible RNA-binding protein (172 aa).

Residues 6–84 (GKLFVGGLSF…RQIRVDQAGK (79 aa)) enclose the RRM domain. The tract at residues 69 to 172 (GKSVDGRQIR…SYDSYATHNE (104 aa)) is disordered. Composition is skewed to gly residues over residues 93-106 (YRGGSAGGRGFFRG) and 114-125 (FSRGGGDRGYGG). Phosphoserine occurs at positions 130, 138, 146, 156, 159, and 163. The segment covering 138-172 (SRDYYSSRSQSGGYSDRSSGGSYRDSYDSYATHNE) has biased composition (low complexity).

In terms of assembly, interacts with EIF4G1. Associates with ribosomes. In terms of processing, methylated on arginine residues. Methylation of the RGG motifs is a prerequisite for recruitment into SGs. Phosphorylated by CK2, GSK3A and GSK3B. Phosphorylation by GSK3B increases RNA-binding activity to the TXN 3'-UTR transcript upon exposure to UV radiation.

Its subcellular location is the nucleus. It is found in the nucleoplasm. The protein resides in the cytoplasm. Its function is as follows. Cold-inducible mRNA binding protein that plays a protective role in the genotoxic stress response by stabilizing transcripts of genes involved in cell survival. Acts as a translational activator. Seems to play an essential role in cold-induced suppression of cell proliferation. Binds specifically to the 3'-untranslated regions (3'-UTRs) of stress-responsive transcripts RPA2 and TXN. Acts as a translational repressor. Promotes assembly of stress granules (SGs), when overexpressed. The polypeptide is Cold-inducible RNA-binding protein (CIRBP) (Pongo abelii (Sumatran orangutan)).